We begin with the raw amino-acid sequence, 395 residues long: General transcription factor IIH subunit 2 (395 aa).

Positions 60–236 constitute a VWFA domain; the sequence is HLYVVVDGSR…HYKELLTHHV (177 aa). Phosphotyrosine is present on Tyr-95. The C4-type zinc finger occupies 291–308; it reads CPQCRAKYCELPVECKIC.

It belongs to the GTF2H2 family. As to quaternary structure, component of the TFIID-containing RNA polymerase II pre-initiation complex that is composed of TBP and at least GTF2A1, GTF2A2, GTF2E1, GTF2E2, GTF2F1, GTF2H2, GTF2H3, GTF2H4, GTF2H5, GTF2B, TCEA1, ERCC2 and ERCC3. Component of the 7-subunit TFIIH core complex composed of XPB/ERCC3, XPD/ERCC2, GTF2H1, GTF2H2, GTF2H3, GTF2H4 and GTF2H5, which is active in NER. The core complex associates with the 3-subunit CDK-activating kinase (CAK) module composed of CCNH/cyclin H, CDK7 and MNAT1 to form the 10-subunit holoenzyme (holo-TFIIH) active in transcription. Interacts with XPB, XPD, GTF2H1 and GTF2H3. In terms of assembly, (Microbial infection) Interacts with varicella-zoster virus IE63 protein. In terms of tissue distribution, widely expressed, with higher expression in skeletal muscle.

It localises to the nucleus. Its function is as follows. Component of the general transcription and DNA repair factor IIH (TFIIH) core complex, which is involved in general and transcription-coupled nucleotide excision repair (NER) of damaged DNA and, when complexed to CAK, in RNA transcription by RNA polymerase II. In NER, TFIIH acts by opening DNA around the lesion to allow the excision of the damaged oligonucleotide and its replacement by a new DNA fragment. In transcription, TFIIH has an essential role in transcription initiation. When the pre-initiation complex (PIC) has been established, TFIIH is required for promoter opening and promoter escape. Phosphorylation of the C-terminal tail (CTD) of the largest subunit of RNA polymerase II by the kinase module CAK controls the initiation of transcription. The N-terminus of GTF2H2 interacts with and regulates XPD whereas an intact C-terminus is required for a successful escape of RNAP II form the promoter. The protein is General transcription factor IIH subunit 2 (GTF2H2) of Homo sapiens (Human).